Consider the following 220-residue polypeptide: Probable GTP-binding protein EngB (220 aa).

An EngB-type G domain is found at 26-200 (EGIEIAFAGR…RAKLDEWYAP (175 aa)). Residues 34-41 (GRSNTGKS), 61-65 (GRTQL), 79-82 (DLPG), 146-149 (TKAD), and 179-181 (FSS) contribute to the GTP site. 2 residues coordinate Mg(2+): serine 41 and threonine 63.

It belongs to the TRAFAC class TrmE-Era-EngA-EngB-Septin-like GTPase superfamily. EngB GTPase family. Mg(2+) is required as a cofactor.

In terms of biological role, necessary for normal cell division and for the maintenance of normal septation. The polypeptide is Probable GTP-binding protein EngB (Vibrio cholerae serotype O1 (strain ATCC 39541 / Classical Ogawa 395 / O395)).